The primary structure comprises 185 residues: Elongation factor P (185 aa).

The protein belongs to the elongation factor P family.

It localises to the cytoplasm. It participates in protein biosynthesis; polypeptide chain elongation. Involved in peptide bond synthesis. Stimulates efficient translation and peptide-bond synthesis on native or reconstituted 70S ribosomes in vitro. Probably functions indirectly by altering the affinity of the ribosome for aminoacyl-tRNA, thus increasing their reactivity as acceptors for peptidyl transferase. The sequence is that of Elongation factor P from Nitrosomonas eutropha (strain DSM 101675 / C91 / Nm57).